We begin with the raw amino-acid sequence, 182 residues long: MWYSKCSWTLVVLVALFALVTGSCLEYGHSCWGAHGKRSGGKAVIDAKQHPLPNSYGLDSVVEQLYNNNNNNQNNQDDDNNDDDSNRNTNANSANNIPLAAPAIISRRESEDRRIGGLKWAQLMRQHRYQLRQLQDQQQQGRGRGGQGQYDAAAESWRKLQQALQAQIDADNENYSGYELTK.

The signal sequence occupies residues methionine 1 to glycine 22. Cysteine 24 and cysteine 31 are disulfide-bonded. Histidine 35 is subject to Histidine amide. A propeptide spanning residues serine 39–lysine 182 is cleaved from the precursor. Disordered regions lie at residues asparagine 67–alanine 103 and glutamine 133–alanine 154. Residues arginine 87–alanine 103 are compositionally biased toward low complexity. Asparagine 174 carries N-linked (GlcNAc...) asparagine glycosylation.

As to expression, expressed in endocrine cells of the larval midgut (at protein level). In the brain, expressed in the optic lobes, lateral protocerebrum, subesophageal ganglion, and intermediate and superior medial protocerebrum (at protein level). Expressed in DN1a neurons but not in other clock neurons and expression follows a rhythmic pattern controlled by the circadian clock (at protein level). In the posterior midgut, expressed in enteroendocrine cells (at protein level). Low levels in larval brain with higher levels in larval and adult gut and adult brain.

The protein localises to the secreted. In terms of biological role, neuropeptide ligand for the CCHamide-1 receptor CCHa1-R. Neuromessenger mediating signaling between neuronal cells of the circadian clock network involved in regulation of sleep latency (the time required to fall asleep), amount of sleep and depth of sleep (arousability). Together with PDF, involved in regulating intensity and periodicity of daytime activity. In subsets of clock neurons modulates the rhythmic expression of PDP1 and PDF, and together with PDF modulates the rhythmic expression of circadian protein PER/period, but not TIM/timeless. Mediates signaling from DN1a (anterior dorsal neurons 1) clock neurons to s-LNv (small ventral lateral neurons) clock neurons through CCHa1-R, contributing to regulation of activity rhythms by the circadian clock, particularly in the morning. May be involved in signaling between clock neurons and non-clock neurons, such as the fan-shaped body, involved in sleep homeostasis. In response to a high protein diet mediates hormonal signaling between the gut and a CCHa1-R expressing subset of dopaminergic cells in the protocerebral anterior medial (PAM) cluster of the brain. This suppresses arousability by mechano-sensory stimulation (but not thermal stimulation) but is not involved in regulation of sleep patterns. This is Neuropeptide CCHamide-1 from Drosophila melanogaster (Fruit fly).